A 364-amino-acid chain; its full sequence is UDP-N-acetylglucosamine--N-acetylmuramyl-(pentapeptide) pyrophosphoryl-undecaprenol N-acetylglucosamine transferase (364 aa).

UDP-N-acetyl-alpha-D-glucosamine-binding positions include 15 to 17 (TGG), Asn-123, Arg-164, Ser-191, and Gln-286.

The protein belongs to the glycosyltransferase 28 family. MurG subfamily.

The protein resides in the cell inner membrane. It carries out the reaction di-trans,octa-cis-undecaprenyl diphospho-N-acetyl-alpha-D-muramoyl-L-alanyl-D-glutamyl-meso-2,6-diaminopimeloyl-D-alanyl-D-alanine + UDP-N-acetyl-alpha-D-glucosamine = di-trans,octa-cis-undecaprenyl diphospho-[N-acetyl-alpha-D-glucosaminyl-(1-&gt;4)]-N-acetyl-alpha-D-muramoyl-L-alanyl-D-glutamyl-meso-2,6-diaminopimeloyl-D-alanyl-D-alanine + UDP + H(+). The protein operates within cell wall biogenesis; peptidoglycan biosynthesis. Cell wall formation. Catalyzes the transfer of a GlcNAc subunit on undecaprenyl-pyrophosphoryl-MurNAc-pentapeptide (lipid intermediate I) to form undecaprenyl-pyrophosphoryl-MurNAc-(pentapeptide)GlcNAc (lipid intermediate II). The protein is UDP-N-acetylglucosamine--N-acetylmuramyl-(pentapeptide) pyrophosphoryl-undecaprenol N-acetylglucosamine transferase of Prochlorococcus marinus (strain MIT 9515).